Here is an 82-residue protein sequence, read N- to C-terminus: U-actitoxin-Oulsp2 (82 aa).

The first 21 residues, 1 to 21 (MNTKLVVVFLLSAILFVSVTA), serve as a signal peptide directing secretion. A propeptide spanning residues 22–46 (SRPGKDLERDEAYETYDDERPYFKR) is cleaved from the precursor. One can recognise a ShKT domain in the interval 48–82 (CKDNLPAATCSNVKANNNCSSEKYKTNCAKTCGEC). Intrachain disulfides connect C48–C82, C57–C75, and C66–C79. A theoritically crucial for binding to potassium channels region spans residues 70–71 (KY).

Belongs to the sea anemone type 1 potassium channel toxin family. Type 1b subfamily.

It localises to the secreted. The protein resides in the nematocyst. In terms of biological role, probable toxin with unknown function. In contrast to similar toxins, this toxin does not inhibit voltage-gated potassium channels (tested at 100 nM). Does not show antimicrobial activities against bacteria and yeasts. The protein is U-actitoxin-Oulsp2 of Oulactis sp. (Sea anemone).